The following is a 489-amino-acid chain: Tripartite motif-containing protein 10 (489 aa).

The RING-type zinc-finger motif lies at 16–61 (CPICQGTLREPVTIDCGHNFCRGCLTRYCEIPGPESEESLSCPLCK). A B box-type zinc finger spans residues 94–135 (EVEDACPEHGEKIYFFCEEDEAQLCVVCRETGQHGAHTVRFL). Positions 99, 102, 121, and 127 each coordinate Zn(2+). Positions 144–180 (EQIQKCLVCLRKEREEIQETQSRENKRIQVLLTQVAT) form a coiled coil. One can recognise a B30.2/SPRY domain in the interval 292-486 (QEMKTFLEKL…FSLSCQEGAV (195 aa)).

The protein belongs to the TRIM/RBCC family. Interacts with IFNAR1; this interaction prevents association of IFNAR1 with TYK2. Expressed in embryonic liver.

The protein localises to the cytoplasm. In terms of biological role, E3 ligase that plays an essential role in the differentiation and survival of terminal erythroid cells. May directly bind to PTEN and promote its ubiquitination, resulting in its proteasomal degradation and activation of hypertrophic signaling. In addition, plays a role in immune response regulation by repressing the phosphorylation of STAT1 and STAT2 in the interferon/JAK/STAT signaling pathway independent of its E3 ligase activity. Mechanistically, interacts with the intracellular domain of IFNAR1 and thereby inhibits the association between TYK2 and IFNAR1. This chain is Tripartite motif-containing protein 10 (Trim10), found in Mus musculus (Mouse).